A 347-amino-acid chain; its full sequence is Methionine import ATP-binding protein MetN (347 aa).

The 240-residue stretch at 2-241 folds into the ABC transporter domain; that stretch reads IKLEGVSKTY…PATRLGRDFL (240 aa). Position 38–45 (38–45) interacts with ATP; it reads GLSGAGKS.

This sequence belongs to the ABC transporter superfamily. Methionine importer (TC 3.A.1.24) family. In terms of assembly, the complex is composed of two ATP-binding proteins (MetN), two transmembrane proteins (MetI) and a solute-binding protein (MetQ).

The protein localises to the cell inner membrane. The catalysed reaction is L-methionine(out) + ATP + H2O = L-methionine(in) + ADP + phosphate + H(+). The enzyme catalyses D-methionine(out) + ATP + H2O = D-methionine(in) + ADP + phosphate + H(+). Part of the ABC transporter complex MetNIQ involved in methionine import. Responsible for energy coupling to the transport system. The chain is Methionine import ATP-binding protein MetN from Chromohalobacter salexigens (strain ATCC BAA-138 / DSM 3043 / CIP 106854 / NCIMB 13768 / 1H11).